An 882-amino-acid polypeptide reads, in one-letter code: Putative HTH-type transcriptional regulator Mb0914c (882 aa).

The region spanning 814 to 879 is the HTH luxR-type domain; that stretch reads PARGWGSLTP…QLVDEAARRG (66 aa). Positions 838–857 form a DNA-binding region, H-T-H motif; sequence NKDIAKRLFVSPRTVQTHLT.

The sequence is that of Putative HTH-type transcriptional regulator Mb0914c from Mycobacterium bovis (strain ATCC BAA-935 / AF2122/97).